Reading from the N-terminus, the 2592-residue chain is 6-hydroxymellein synthase cdmE (2592 aa).

Basic and acidic residues predominate over residues M1–P11. The interval M1–A25 is disordered. The Ketosynthase family 3 (KS3) domain maps to L32–S456. Active-site for beta-ketoacyl synthase activity residues include C205, H340, and H379. The tract at residues V589–K910 is malonyl-CoA:ACP transacylase (MAT) domain. The tract at residues H978–D1113 is N-terminal hotdog fold. Residues H978–S1291 are dehydratase (DH) domain. In terms of domain architecture, PKS/mFAS DH spans H978–D1296. A C-terminal hotdog fold region spans residues T1140–D1296. Residues I1462 and E1484 each contribute to the S-adenosyl-L-methionine site. Positions L1483–L1591 are methyltransferase (CMeT) domain. The segment at G1887–I2199 is enoyl reductase (ER) domain. The segment at A2223–N2398 is ketoreductase (KR) domain. Positions V2509 to S2586 constitute a Carrier domain. O-(pantetheine 4'-phosphoryl)serine is present on S2546.

The catalysed reaction is 5 malonyl-CoA + AH2 + 5 H(+) = 6-hydroxymellein + A + 5 CO2 + 5 CoA + H2O. It participates in secondary metabolite biosynthesis; terpenoid biosynthesis. Its function is as follows. Highly reducing polyketide synthase; part of the gene cluster that mediates the biosynthesis of chrodrimanin B, a meroterpenoid that acts as a potent blocker of insect GABA-gated chloride channels. The first step of the pathway is the biosynthesis of 6-hydroxymellein by the polyketide synthase cdmE. The prenyltransferase cdmH acts as a 6-hydroxymellein 5-farnesyltransferase and produces the hydrophobic metabolite verruculide C. The FAD-dependent monooxygenase cdmI further converts verruculide C into verruculide B. The terpene cyclase cdmG then produced the pentacyclic molecule 3-hydroxypentacecilide A, the backbone structure of chrodrimanin B, via folding the farnesyl moiety of the substrate into the chair-boat conformation. The short-chain dehydrogenase/reductase cdmF functions as the 3-OH dehydrogenase that oxidizes the C-3 hydroxyl group of 3-hydroxypentacecilide A and produces chrodrimanin C, the dehydrogenated product of 3-hydroxypentacecilide A. The cytochrome P450 monooxygenase cdmJ then accepts both 3-hydroxypentacecilide A and chrodrimanin C and functions as a C-7-beta-hydroxylase to produce respectively chrodrimanin H and chrodrimanin F. The dioxygenase cdmA accepts chrodrimanin H to afford chrodrimanin E, which is further transformed to chrodrimanin A by the dioxygenase cdmD. CdmA can also accept chrodrimanin C as substrate to convert it into verruculide A, which is further converted into chrodrimanin T by cdmD. The last step of the biosynthesis is proposed to be performed by the acetyltransferase cdmC which acetylates chrodrimanin A to yield chrodrimanin B. The pathway may also lead to the production of additional shunt products, including chrodrimanins T and U. This chain is 6-hydroxymellein synthase cdmE, found in Talaromyces verruculosus (Penicillium verruculosum).